A 243-amino-acid chain; its full sequence is uncharacterized protein (243 aa).

This is an uncharacterized protein from Acidianus bottle-shaped virus (isolate Italy/Pozzuoli) (ABV).